The following is a 304-amino-acid chain: Elongation factor Ts (304 aa).

Residues 79 to 82 (TDFV) are involved in Mg(2+) ion dislocation from EF-Tu.

This sequence belongs to the EF-Ts family.

Its subcellular location is the cytoplasm. In terms of biological role, associates with the EF-Tu.GDP complex and induces the exchange of GDP to GTP. It remains bound to the aminoacyl-tRNA.EF-Tu.GTP complex up to the GTP hydrolysis stage on the ribosome. This Polaromonas sp. (strain JS666 / ATCC BAA-500) protein is Elongation factor Ts.